We begin with the raw amino-acid sequence, 275 residues long: Prohibitin-1 (275 aa).

The AIM signature appears at 106-109 (YQNL).

The protein belongs to the prohibitin family. The mitochondrial prohibitin complex consists of two subunits (PHB1 and PHB2). The subunits assemble into a membrane-associated ring-shaped supercomplex of approximately 1 mDa. Interacts with ATG24/SNX4; the interaction is direct and plays a role in mitophagy.

The protein resides in the mitochondrion inner membrane. Prohibitin probably acts as a holdase/unfoldase for the stabilization of newly synthesized mitochondrial proteins. Involved in mitophagy. Required for the switch to necrotrophic growth. The chain is Prohibitin-1 from Colletotrichum higginsianum (strain IMI 349063) (Crucifer anthracnose fungus).